Here is a 184-residue protein sequence, read N- to C-terminus: ATP synthase subunit b, chloroplastic (184 aa).

A helical transmembrane segment spans residues 27 to 49 (LATNPINLSVVLGVLIFFGKGVL).

This sequence belongs to the ATPase B chain family. As to quaternary structure, F-type ATPases have 2 components, F(1) - the catalytic core - and F(0) - the membrane proton channel. F(1) has five subunits: alpha(3), beta(3), gamma(1), delta(1), epsilon(1). F(0) has four main subunits: a(1), b(1), b'(1) and c(10-14). The alpha and beta chains form an alternating ring which encloses part of the gamma chain. F(1) is attached to F(0) by a central stalk formed by the gamma and epsilon chains, while a peripheral stalk is formed by the delta, b and b' chains.

It localises to the plastid. The protein localises to the chloroplast thylakoid membrane. Its function is as follows. F(1)F(0) ATP synthase produces ATP from ADP in the presence of a proton or sodium gradient. F-type ATPases consist of two structural domains, F(1) containing the extramembraneous catalytic core and F(0) containing the membrane proton channel, linked together by a central stalk and a peripheral stalk. During catalysis, ATP synthesis in the catalytic domain of F(1) is coupled via a rotary mechanism of the central stalk subunits to proton translocation. Functionally, component of the F(0) channel, it forms part of the peripheral stalk, linking F(1) to F(0). This Citrus sinensis (Sweet orange) protein is ATP synthase subunit b, chloroplastic.